A 224-amino-acid chain; its full sequence is Homeobox protein Hox-B6 (224 aa).

An Antp-type hexapeptide motif is present at residues 127–132 (VYPWMQ). A DNA-binding region (homeobox) is located at residues 146 to 205 (GRRGRQTYTRYQTLELEKEFHYNRYLTRRRRIEIAHALCLTERQIKIWFQNRRMKWKKES). Position 214 is a phosphoserine (Ser214).

It belongs to the Antp homeobox family.

It is found in the nucleus. Sequence-specific transcription factor which is part of a developmental regulatory system that provides cells with specific positional identities on the anterior-posterior axis. The protein is Homeobox protein Hox-B6 (Hoxb6) of Mus musculus (Mouse).